Consider the following 239-residue polypeptide: Probable transcriptional regulatory protein lin0388 (239 aa).

It belongs to the TACO1 family. YeeN subfamily.

The protein resides in the cytoplasm. The chain is Probable transcriptional regulatory protein lin0388 from Listeria innocua serovar 6a (strain ATCC BAA-680 / CLIP 11262).